The sequence spans 103 residues: MRLKKNDNVLVIAGKDKGKTGKVRYAFPRTDRVLVEGVNMIKRHSRARGQAKQAGIIEREAPLHVSNLMLLCSKCNKPARIGSRELADGKSVRYCKSCNEVID.

Belongs to the universal ribosomal protein uL24 family. Part of the 50S ribosomal subunit.

In terms of biological role, one of two assembly initiator proteins, it binds directly to the 5'-end of the 23S rRNA, where it nucleates assembly of the 50S subunit. Its function is as follows. One of the proteins that surrounds the polypeptide exit tunnel on the outside of the subunit. The polypeptide is Large ribosomal subunit protein uL24 (Dehalococcoides mccartyi (strain ATCC BAA-2266 / KCTC 15142 / 195) (Dehalococcoides ethenogenes (strain 195))).